The sequence spans 775 residues: 5-methyltetrahydropteroyltriglutamate--homocysteine methyltransferase (775 aa).

Residues 16-19 and lysine 115 contribute to the 5-methyltetrahydropteroyltri-L-glutamate site; that span reads REMK. L-homocysteine contacts are provided by residues 435–437 and glutamate 488; that span reads IGS. L-methionine-binding positions include 435-437 and glutamate 488; that span reads IGS. 5-methyltetrahydropteroyltri-L-glutamate contacts are provided by residues 519–520 and tryptophan 565; that span reads RC. Aspartate 603 serves as a coordination point for L-homocysteine. Residue aspartate 603 coordinates L-methionine. Glutamate 609 contacts 5-methyltetrahydropteroyltri-L-glutamate. Residues histidine 645, cysteine 647, and glutamate 669 each contribute to the Zn(2+) site. The active-site Proton donor is the histidine 698. Residue cysteine 730 coordinates Zn(2+).

This sequence belongs to the vitamin-B12 independent methionine synthase family. Zn(2+) is required as a cofactor.

It carries out the reaction 5-methyltetrahydropteroyltri-L-glutamate + L-homocysteine = tetrahydropteroyltri-L-glutamate + L-methionine. The protein operates within amino-acid biosynthesis; L-methionine biosynthesis via de novo pathway; L-methionine from L-homocysteine (MetE route): step 1/1. Its function is as follows. Catalyzes the transfer of a methyl group from 5-methyltetrahydrofolate to homocysteine resulting in methionine formation. This chain is 5-methyltetrahydropteroyltriglutamate--homocysteine methyltransferase, found in Coxiella burnetii (strain RSA 331 / Henzerling II).